Consider the following 597-residue polypeptide: Cell division cycle protein 23 homolog (597 aa).

The residue at position 2 (alanine 2) is an N-acetylalanine. TPR repeat units lie at residues 27 to 63, 73 to 112, and 114 to 144; these read SDLREIKKQLLLIAGLTRERGLLHSSKWSAELAFSLP, PPPITEEDAQDMDAYTLAKAYFDVKEYDRAAHFLHGCNSK, and AYFLYMYSRYLSGEKKKDDETVDSLGPLEKG. Lysine 147 participates in a covalent cross-link: Glycyl lysine isopeptide (Lys-Gly) (interchain with G-Cter in SUMO2). TPR repeat units follow at residues 169–200, 229–259, 263–293, 297–327, 331–361, 366–395, 400–432, and 433–466; these read GFGLYLYGVVLRKLDLVKEAIDVFVEATHVLP, MKEFFLAHIYTELQLIEEALQKYQNLIDVGF, SYIVSQIAVAYHNIRDIDKALSIFNELRKQD, IENMDTFSNLLYVRSMKSELSYLAHNLCEID, VETCCVIGNYYSLRSQHEKAALYFQRALKLN, GAWTLMGHEYMEMKNTSAAIQAYRHAIEVN, RAWYGLGQTYEILKMPFYCLYYYRRAHQLRPND, and SRMLVALGECYEKLNQLVEAKKCYWRAYAVGDVE. Tyrosine 273 carries the phosphotyrosine modification. Lysine 467 bears the N6-acetyllysine mark. 2 TPR repeats span residues 468-500 and 504-540; these read MALVKLAKLHEQLTESEQAAQCYIKYIQDIYSC and VEHLEESTAFRYLAQYYFKCKLWDEASTCAQKCCAFN. Residues threonine 562 and threonine 565 each carry the phosphothreonine modification. Serine 578 is modified (phosphoserine). Phosphothreonine is present on threonine 582. Serine 588 and serine 593 each carry phosphoserine. Threonine 596 is modified (phosphothreonine).

Belongs to the APC8/CDC23 family. In terms of assembly, the mammalian APC/C is composed at least of 14 distinct subunits ANAPC1, ANAPC2, CDC27/APC3, ANAPC4, ANAPC5, CDC16/APC6, ANAPC7, CDC23/APC8, ANAPC10, ANAPC11, CDC26/APC12, ANAPC13, ANAPC15 and ANAPC16 that assemble into a complex of at least 19 chains with a combined molecular mass of around 1.2 MDa; APC/C interacts with FZR1 and FBXO5. Interacts with FBXO43; the interaction is direct. In terms of processing, phosphorylated. Phosphorylation on Thr-562 occurs specifically during mitosis.

It functions in the pathway protein modification; protein ubiquitination. Component of the anaphase promoting complex/cyclosome (APC/C), a cell cycle-regulated E3 ubiquitin ligase that controls progression through mitosis and the G1 phase of the cell cycle. The APC/C complex acts by mediating ubiquitination and subsequent degradation of target proteins: it mainly mediates the formation of 'Lys-11'-linked polyubiquitin chains and, to a lower extent, the formation of 'Lys-48'- and 'Lys-63'-linked polyubiquitin chains. The APC/C complex catalyzes assembly of branched 'Lys-11'-/'Lys-48'-linked branched ubiquitin chains on target proteins. The sequence is that of Cell division cycle protein 23 homolog (CDC23) from Homo sapiens (Human).